Here is a 674-residue protein sequence, read N- to C-terminus: Polyunsaturated fatty acid 5-lipoxygenase (674 aa).

In terms of domain architecture, PLAT spans 2–118 (PSYTVTVATG…EIVLRDGRAK (117 aa)). Positions 17, 18, 19, 44, 45, 47, 79, and 80 each coordinate Ca(2+). In terms of domain architecture, Lipoxygenase spans 119 to 674 (LARDDQIHIL…PDRIPNSVAI (556 aa)). Ser-272 carries the phosphoserine modification. 2 residues coordinate Fe cation: His-368 and His-373. Ser-524 is subject to Phosphoserine. Residues His-551, Asn-555, and Ile-674 each contribute to the Fe cation site.

It belongs to the lipoxygenase family. In terms of assembly, homodimer. Interacts with ALOX5AP and LTC4S. Interacts with COTL1, the interaction is required for stability and efficient catalytic activity. Interacts with PIK3R1; this interaction bridges ALOX5 with CD40 after CD40 ligation in B cells and leads to the production of reactive oxygen species (ROS). Interacts (via PLAT domain) with DICER1 (via Dicer dsRNA-binding fold domain); this interaction enhances arachidonate 5-lipoxygenase activity and modifies the miRNA precursor processing activity of DICER1. Requires Fe cation as cofactor. Post-translationally, serine phosphorylation by MAPKAPK2 is stimulated by arachidonic acid. Phosphorylation on Ser-524 by PKA has an inhibitory effect. Phosphorylation on Ser-272 prevents export from the nucleus. Phosphorylation at Ser-524 is stimulated by 8-bromo-3',5'-cyclic AMP or prostaglandin E2. As to expression, expressed in skin Langerhans cells and their emigrated counterparts in draining lymph nodes. Highly expressed in circulating leukocytes.

It is found in the cytoplasm. It localises to the nucleus matrix. Its subcellular location is the nucleus membrane. The protein resides in the perinuclear region. The protein localises to the cytosol. It is found in the nucleus envelope. It localises to the nucleus intermembrane space. The catalysed reaction is (5Z,8Z,11Z,14Z)-eicosatetraenoate + O2 = (5S)-hydroperoxy-(6E,8Z,11Z,14Z)-eicosatetraenoate. It catalyses the reaction (5Z,8Z,11Z,14Z)-eicosatetraenoate + O2 = leukotriene A4 + H2O. The enzyme catalyses (5Z,8Z,11Z,14Z)-eicosatetraenoate + O2 = (8S)-hydroperoxy-(5Z,9E,11Z,14Z)-eicosatetraenoate. It carries out the reaction (5Z,8Z,11Z,14Z)-eicosatetraenoate + O2 = (12S)-hydroperoxy-(5Z,8Z,10E,14Z)-eicosatetraenoate. The catalysed reaction is 18-HEPE + O2 = (5S)-hydroperoxy-18-hydroxy-(7E,9E,11Z,14Z,16E)-eicosapentaenoate. It catalyses the reaction (18R)-hydroxy-(5Z,8Z,11Z,14Z,16E)-eicosapentaenoate + O2 = (5S)-hydroperoxy-(18R)-hydroxy-(6E,8Z,11Z,14Z,16E)-eicosapentaenoate. The enzyme catalyses (18S)-hydroxy-(5Z,8Z,11Z,14Z,16E)-eicosapentaenoate + O2 = (5S)-hydroperoxy-(18S)-hydroxy-(6E,8Z,11Z,14Z,16E)-eicosapentaenoate. It carries out the reaction (5S)-hydroperoxy-(18S)-hydroxy-(6E,8Z,11Z,14Z,16E)-eicosapentaenoate = (5S,6S)-epoxy-(18S)-hydroxy-(7E,9E,11Z,14Z,16E)-eicosapentaenoate + H2O. The catalysed reaction is (5S)-hydroperoxy-(18R)-hydroxy-(6E,8Z,11Z,14Z,16E)-eicosapentaenoate = (5S,6S)-epoxy-(18R)-hydroxy-(7E,9E,11Z,14Z,16E)-eicosapentaenoate + H2O. It catalyses the reaction (5S)-hydroperoxy-18-hydroxy-(7E,9E,11Z,14Z,16E)-eicosapentaenoate = (5S,6S)-epoxy-18-hydroxy-(7E,9E,11Z,14Z,16E)-eicosapentaenoate + H2O. The enzyme catalyses (15S)-hydroxy-(5Z,8Z,11Z,13E)-eicosatetraenoate + O2 = (5S)-hydroperoxy-(15S)-hydroxy-(6E,8Z,11Z,13E)-eicosatetraenoate. It carries out the reaction (5S)-hydroperoxy-(6E,8Z,11Z,14Z)-eicosatetraenoate = leukotriene A4 + H2O. The catalysed reaction is (5Z,8Z)-eicosadienoate + O2 = (5S)-hydroperoxy-(6E,8Z)-eicosadienoate. It catalyses the reaction (12S)-hydroxy-(5Z,8Z,10E,14Z)-eicosatetraenoate + O2 = (5S)-hydroperoxy-(12S)-hydroxy-(6E,8Z,10E,14Z)-eicosatetraenoate. The enzyme catalyses (5Z,8Z,11Z,14Z,17Z)-eicosapentaenoate + O2 = 5-hydroperoxy-(6E,8Z,11Z,14Z,17Z)-eicosapentaenoate. It carries out the reaction (4Z,7Z,10Z,13Z,16Z,19Z)-docosahexaenoate + O2 = (14S)-hydroperoxy-(4Z,7Z,10Z,12E,16Z,19Z)-docosahexaenoate. The catalysed reaction is (4Z,7Z,10Z,13Z,16Z,19Z)-docosahexaenoate + O2 = (7S)-hydroperoxy-(4Z,8E,10Z,13Z,16Z,19Z)-docosahexaenoate. It catalyses the reaction (4Z,7Z,10Z,13Z,16Z,19Z)-docosahexaenoate + O2 = (17S)-hydroperoxy-(4Z,7Z,10Z,13Z,15E,19Z)-docosahexaenoate. The protein operates within lipid metabolism; leukotriene A4 biosynthesis. In terms of biological role, catalyzes the oxygenation of arachidonate to 5-hydroperoxyeicosatetraenoate (5-HPETE) followed by the dehydration to 5,6- epoxyeicosatetraenoate (Leukotriene A4/LTA4), the first two steps in the biosynthesis of leukotrienes, which are potent mediators of inflammation. Also catalyzes the oxygenation of arachidonic acid into 8-hydroperoxyicosatetraenoic acid (8-HPETE) and 12-hydroperoxyicosatetraenoic acid (12-HPETE). Displays lipoxin synthase activity being able to convert (15S)-HETE into a conjugate tetraene. Although arachidonate is the preferred substrate, this enzyme can also metabolize oxidized fatty acids derived from arachidonate such as (15S)-HETE, eicosapentaenoate (EPA) such as (18R)- and (18S)-HEPE or docosahexaenoate (DHA) which lead to the formation of specialized pro-resolving mediators (SPM) lipoxin and resolvins E and D respectively, therefore it participates in anti-inflammatory responses. Oxidation of DHA directly inhibits endothelial cell proliferation and sprouting angiogenesis via peroxisome proliferator-activated receptor gamma (PPARgamma). It does not catalyze the oxygenation of linoleic acid and does not convert (5S)-HETE to lipoxin isomers. In addition to inflammatory processes, participates in dendritic cell migration, wound healing through an antioxidant mechanism based on heme oxygenase-1 (HO-1) regulation expression, monocyte adhesion to the endothelium via ITGAM expression on monocytes. Moreover, it helps establish an adaptive humoral immunity by regulating primary resting B cells and follicular helper T cells and participates in the CD40-induced production of reactive oxygen species (ROS) after CD40 ligation in B cells through interaction with PIK3R1 that bridges ALOX5 with CD40. May also play a role in glucose homeostasis, regulation of insulin secretion and palmitic acid-induced insulin resistance via AMPK. Can regulate bone mineralization and fat cell differentiation increases in induced pluripotent stem cells. In Mus musculus (Mouse), this protein is Polyunsaturated fatty acid 5-lipoxygenase.